Here is a 334-residue protein sequence, read N- to C-terminus: Holliday junction branch migration complex subunit RuvB (334 aa).

The segment at 1-182 (MNERMVDQSM…FGVHLRLEYY (182 aa)) is large ATPase domain (RuvB-L). Residues leucine 21, arginine 22, glycine 63, lysine 66, threonine 67, threonine 68, 129–131 (EDF), arginine 172, tyrosine 182, and arginine 219 each bind ATP. Threonine 67 is a binding site for Mg(2+). Positions 183–253 (NESDLKEIII…TTKHALGLLQ (71 aa)) are small ATPAse domain (RuvB-S). The tract at residues 256–334 (QHGLDYIDHK…HFAKSNEERG (79 aa)) is head domain (RuvB-H). Residues arginine 292, arginine 311, and arginine 316 each contribute to the DNA site.

Belongs to the RuvB family. In terms of assembly, homohexamer. Forms an RuvA(8)-RuvB(12)-Holliday junction (HJ) complex. HJ DNA is sandwiched between 2 RuvA tetramers; dsDNA enters through RuvA and exits via RuvB. An RuvB hexamer assembles on each DNA strand where it exits the tetramer. Each RuvB hexamer is contacted by two RuvA subunits (via domain III) on 2 adjacent RuvB subunits; this complex drives branch migration. In the full resolvosome a probable DNA-RuvA(4)-RuvB(12)-RuvC(2) complex forms which resolves the HJ.

Its subcellular location is the cytoplasm. The enzyme catalyses ATP + H2O = ADP + phosphate + H(+). Its function is as follows. The RuvA-RuvB-RuvC complex processes Holliday junction (HJ) DNA during genetic recombination and DNA repair, while the RuvA-RuvB complex plays an important role in the rescue of blocked DNA replication forks via replication fork reversal (RFR). RuvA specifically binds to HJ cruciform DNA, conferring on it an open structure. The RuvB hexamer acts as an ATP-dependent pump, pulling dsDNA into and through the RuvAB complex. RuvB forms 2 homohexamers on either side of HJ DNA bound by 1 or 2 RuvA tetramers; 4 subunits per hexamer contact DNA at a time. Coordinated motions by a converter formed by DNA-disengaged RuvB subunits stimulates ATP hydrolysis and nucleotide exchange. Immobilization of the converter enables RuvB to convert the ATP-contained energy into a lever motion, pulling 2 nucleotides of DNA out of the RuvA tetramer per ATP hydrolyzed, thus driving DNA branch migration. The RuvB motors rotate together with the DNA substrate, which together with the progressing nucleotide cycle form the mechanistic basis for DNA recombination by continuous HJ branch migration. Branch migration allows RuvC to scan DNA until it finds its consensus sequence, where it cleaves and resolves cruciform DNA. This chain is Holliday junction branch migration complex subunit RuvB, found in Staphylococcus aureus (strain N315).